A 310-amino-acid polypeptide reads, in one-letter code: Tryptophan 2,3-dioxygenase (310 aa).

The segment at 1–36 (MQPPGEDAPAGCPFSGARAAHSAPAAPAAHEASHVP) is disordered. The span at 15–36 (SGARAAHSAPAAPAAHEASHVP) shows a compositional bias: low complexity. Residues 79–83 (FIIQH), Tyr141, and Arg145 contribute to the substrate site. His268 is a heme binding site. Thr282 is a binding site for substrate.

Belongs to the tryptophan 2,3-dioxygenase family. Homotetramer. Requires heme as cofactor.

The catalysed reaction is L-tryptophan + O2 = N-formyl-L-kynurenine. It functions in the pathway amino-acid degradation; L-tryptophan degradation via kynurenine pathway; L-kynurenine from L-tryptophan: step 1/2. Its function is as follows. Heme-dependent dioxygenase that catalyzes the oxidative cleavage of the L-tryptophan (L-Trp) pyrrole ring and converts L-tryptophan to N-formyl-L-kynurenine. Catalyzes the oxidative cleavage of the indole moiety. In Burkholderia lata (strain ATCC 17760 / DSM 23089 / LMG 22485 / NCIMB 9086 / R18194 / 383), this protein is Tryptophan 2,3-dioxygenase.